We begin with the raw amino-acid sequence, 387 residues long: MASILTLDGLYAEVPKFLPEALREGCAGKNPLSFYIQQILNLMGCDGNEYHVLFTSSSEEANTHMIMAAVRRHLLRTQQRPHVIIGAGEPPSITECVKALAQEKRCVYTIIPLKNFEIDPVAVYDAIQSNTCLACISGTNAVVKTFNKLQDISKVLRGIPLHSEVSDLVYQGCIKQNPPADSFSINSLYGFLGVGILGMKKKVMQGLGPLIFGGGLRGGSPNIPGIHAMYRTLTQQRPSIKKINTIHKLFMKTLKKHQHVYLPIGGVSAEDMSTKDMSTKDIPSTDMLVGPKGLPGYILFSVGHRAEELQKKIFTKFNIKIGRIVDLQEILFRIKIPQKYWETLLFIQLRDNLTKEDIKRVMVVLMHLDTITPRGSLPPPSYSSSFS.

Pyridoxal 5'-phosphate-binding positions include 58–59 (SE) and 184–186 (SIN).

The protein belongs to the class-V pyridoxal-phosphate-dependent aminotransferase family. NifS/IscS subfamily. The cofactor is pyridoxal 5'-phosphate.

It localises to the virion. This is NifS-like protein from African swine fever virus (isolate Tick/South Africa/Pretoriuskop Pr4/1996) (ASFV).